The sequence spans 174 residues: uncharacterized protein (174 aa).

A helical transmembrane segment spans residues 126–146 (AIDEFIITVIPVVLGSGIPLF).

It to B.subtilis YyaP.

Its subcellular location is the membrane. This is an uncharacterized protein from Bacillus subtilis (strain 168).